A 329-amino-acid polypeptide reads, in one-letter code: MSIEFNALNFKKVALAAQDKLPKLALINLDDWGLITLIGDDKKSYLQGQVTCDVVSLPINASIFGAHCDAKGKMRTIFRLFNHNEGYGFLQRKSVMEIQLPELKKYAVFSKVDIEASSDVLLGLSGEQAQAVVEQHFPGDGDVRVITAGTAIKVDDDRWLFAIAPEQAEQLINTLVETHNNVQLSDSTLWDLYDVLYAIPRIDAVTALEFIPQAVNLQAVDGISFKKGCYTGQETVARAKYRGINKRAMYIVTGEATQFPFTGDALERSVGDNWRKGGTLLASYLYADGQAIALVVLPNDLDEATQFRLADQPEAIWTQLDLPYSLDDK.

Folate contacts are provided by Trp-32 and Trp-190.

The protein belongs to the tRNA-modifying YgfZ family.

It localises to the cytoplasm. Folate-binding protein involved in regulating the level of ATP-DnaA and in the modification of some tRNAs. It is probably a key factor in regulatory networks that act via tRNA modification, such as initiation of chromosomal replication. This chain is tRNA-modifying protein YgfZ, found in Photobacterium profundum (strain SS9).